Here is a 603-residue protein sequence, read N- to C-terminus: UvrABC system protein C (603 aa).

The GIY-YIG domain maps to 13–92 (SSPGVYLMKD…IKQHHPKYNV (80 aa)). The UVR domain occupies 205–240 (EEVVKDLEKVIQKASDNLEFEQAANYYRTLSLIKQA).

This sequence belongs to the UvrC family. Interacts with UvrB in an incision complex.

It is found in the cytoplasm. The UvrABC repair system catalyzes the recognition and processing of DNA lesions. UvrC both incises the 5' and 3' sides of the lesion. The N-terminal half is responsible for the 3' incision and the C-terminal half is responsible for the 5' incision. This is UvrABC system protein C from Chlamydia pneumoniae (Chlamydophila pneumoniae).